The sequence spans 245 residues: 1-(5-phosphoribosyl)-5-[(5-phosphoribosylamino)methylideneamino] imidazole-4-carboxamide isomerase (245 aa).

D7 acts as the Proton acceptor in catalysis. D129 functions as the Proton donor in the catalytic mechanism.

Belongs to the HisA/HisF family.

The protein localises to the cytoplasm. It carries out the reaction 1-(5-phospho-beta-D-ribosyl)-5-[(5-phospho-beta-D-ribosylamino)methylideneamino]imidazole-4-carboxamide = 5-[(5-phospho-1-deoxy-D-ribulos-1-ylimino)methylamino]-1-(5-phospho-beta-D-ribosyl)imidazole-4-carboxamide. It functions in the pathway amino-acid biosynthesis; L-histidine biosynthesis; L-histidine from 5-phospho-alpha-D-ribose 1-diphosphate: step 4/9. In Enterobacter sp. (strain 638), this protein is 1-(5-phosphoribosyl)-5-[(5-phosphoribosylamino)methylideneamino] imidazole-4-carboxamide isomerase.